The following is a 324-amino-acid chain: Elongation factor Ts, mitochondrial (324 aa).

The transit peptide at 1–44 (MSLLRSLRFFPVACTGRSARAVLLQPSQPWLTFHAGPSLSSAAS) directs the protein to the mitochondrion. An N6-succinyllysine mark is found at lysine 75, lysine 132, and lysine 191. Position 269 is a phosphoserine (serine 269).

Belongs to the EF-Ts family.

It localises to the mitochondrion. In terms of biological role, associates with the EF-Tu.GDP complex and induces the exchange of GDP to GTP. It remains bound to the aminoacyl-tRNA.EF-Tu.GTP complex up to the GTP hydrolysis stage on the ribosome. This chain is Elongation factor Ts, mitochondrial (Tsfm), found in Mus musculus (Mouse).